Reading from the N-terminus, the 120-residue chain is Prophage bactoprenol-linked glucose translocase homolog (120 aa).

Residues 1–9 are Cytoplasmic-facing; it reads MLKLFAKYT. Residues 10–30 traverse the membrane as a helical segment; that stretch reads SIGVLNTLIHWVVFGVCIYVA. At 31–33 the chain is on the periplasmic side; sequence HTN. A helical transmembrane segment spans residues 34–54; the sequence is QALANFAGFVVAVSFSFFANA. The Cytoplasmic segment spans residues 55–64; it reads KFTFKASTTT. A helical transmembrane segment spans residues 65–85; it reads MRYMLYVGFMGTLSATVGWAA. Residues 86–88 are Periplasmic-facing; that stretch reads DRC. Residues 89–109 traverse the membrane as a helical segment; it reads ALPPMITLVTFSAISLVCGFV. Topologically, residues 110 to 120 are cytoplasmic; sequence YSKFIVFRDAK.

The protein belongs to the GtrA family.

It is found in the cell inner membrane. Functionally, involved in O antigen modification. Involved in the translocation of bactoprenol-linked glucose across the cytoplasmic membrane. The polypeptide is Prophage bactoprenol-linked glucose translocase homolog (yfdG) (Escherichia coli (strain K12)).